Reading from the N-terminus, the 425-residue chain is CinA-like protein (425 aa).

It belongs to the CinA family.

The protein is CinA-like protein of Shewanella sp. (strain ANA-3).